Here is a 392-residue protein sequence, read N- to C-terminus: CCA-adding enzyme (392 aa).

S45 and K48 together coordinate ATP. S45 and K48 together coordinate CTP. Residues D55, D57, and E106 each contribute to the Mg(2+) site. ATP-binding residues include H129, K148, and Y157. 3 residues coordinate CTP: H129, K148, and Y157.

The protein belongs to the tRNA nucleotidyltransferase/poly(A) polymerase family. Archaeal CCA-adding enzyme subfamily. Homodimer. The cofactor is Mg(2+).

It catalyses the reaction a tRNA precursor + 2 CTP + ATP = a tRNA with a 3' CCA end + 3 diphosphate. The catalysed reaction is a tRNA with a 3' CCA end + 2 CTP + ATP = a tRNA with a 3' CCACCA end + 3 diphosphate. Catalyzes the addition and repair of the essential 3'-terminal CCA sequence in tRNAs without using a nucleic acid template. Adds these three nucleotides in the order of C, C, and A to the tRNA nucleotide-73, using CTP and ATP as substrates and producing inorganic pyrophosphate. tRNA 3'-terminal CCA addition is required both for tRNA processing and repair. Also involved in tRNA surveillance by mediating tandem CCA addition to generate a CCACCA at the 3' terminus of unstable tRNAs. While stable tRNAs receive only 3'-terminal CCA, unstable tRNAs are marked with CCACCA and rapidly degraded. This chain is CCA-adding enzyme, found in Nanoarchaeum equitans (strain Kin4-M).